The following is a 387-amino-acid chain: Capsid protein (387 aa).

Positions methionine 1–lysine 33 are enriched in basic residues. Disordered stretches follow at residues methionine 1–alanine 47 and lysine 365–asparagine 387. 2 consecutive short sequence motifs (nuclear localization signal) follow at residues proline 8–arginine 15 and threonine 30–aspartate 37. A compositionally biased stretch (low complexity) spans asparagine 370–alanine 379.

Its subcellular location is the host nucleus. It is found in the virion. Functionally, self-assembles to form the virion icosahedral capsid. The protein is Capsid protein of Chaetoceros protobacilladnavirus 2 (Chaetoceros sp. DNA virus 7).